The following is an 80-amino-acid chain: 17 kDa surface antigen (80 aa).

Over residues Ala-47–Glu-58 the composition is skewed to polar residues. Residues Ala-47–Thr-80 form a disordered region.

This sequence belongs to the rickettsiale 17 kDa surface antigen family.

It localises to the cell outer membrane. The protein is 17 kDa surface antigen (omp) of Rickettsia canadensis.